A 190-amino-acid polypeptide reads, in one-letter code: Elongation factor P-like protein (190 aa).

Belongs to the elongation factor P family.

The sequence is that of Elongation factor P-like protein from Photorhabdus laumondii subsp. laumondii (strain DSM 15139 / CIP 105565 / TT01) (Photorhabdus luminescens subsp. laumondii).